Here is a 491-residue protein sequence, read N- to C-terminus: Cytochrome P450 2B9 (491 aa).

Ser-128 is modified (phosphoserine; by PKA). Residue Cys-436 coordinates heme.

It belongs to the cytochrome P450 family. Heme serves as cofactor.

The protein resides in the endoplasmic reticulum membrane. The protein localises to the microsome membrane. The catalysed reaction is an organic molecule + reduced [NADPH--hemoprotein reductase] + O2 = an alcohol + oxidized [NADPH--hemoprotein reductase] + H2O + H(+). In terms of biological role, cytochromes P450 are a group of heme-thiolate monooxygenases. In liver microsomes, this enzyme is involved in an NADPH-dependent electron transport pathway. It oxidizes a variety of structurally unrelated compounds, including steroids, fatty acids, and xenobiotics. This chain is Cytochrome P450 2B9 (Cyp2b9), found in Mus musculus (Mouse).